A 339-amino-acid polypeptide reads, in one-letter code: Transaldolase (339 aa).

Lys135 functions as the Schiff-base intermediate with substrate in the catalytic mechanism.

This sequence belongs to the transaldolase family. Type 1 subfamily. In terms of assembly, homodimer.

The protein localises to the cytoplasm. It carries out the reaction D-sedoheptulose 7-phosphate + D-glyceraldehyde 3-phosphate = D-erythrose 4-phosphate + beta-D-fructose 6-phosphate. It participates in carbohydrate degradation; pentose phosphate pathway; D-glyceraldehyde 3-phosphate and beta-D-fructose 6-phosphate from D-ribose 5-phosphate and D-xylulose 5-phosphate (non-oxidative stage): step 2/3. In terms of biological role, transaldolase is important for the balance of metabolites in the pentose-phosphate pathway. In Prochlorococcus marinus (strain MIT 9211), this protein is Transaldolase.